The following is a 594-amino-acid chain: UvrABC system protein C (594 aa).

The region spanning 13-99 (NGSGVYQYFD…IKQLKPKYNI (87 aa)) is the GIY-YIG domain. The region spanning 205–240 (DKLIKELQLKMDRLSSNLRFEEALIYRDRISKIQKI) is the UVR domain.

Belongs to the UvrC family. As to quaternary structure, interacts with UvrB in an incision complex.

The protein localises to the cytoplasm. In terms of biological role, the UvrABC repair system catalyzes the recognition and processing of DNA lesions. UvrC both incises the 5' and 3' sides of the lesion. The N-terminal half is responsible for the 3' incision and the C-terminal half is responsible for the 5' incision. The sequence is that of UvrABC system protein C from Helicobacter acinonychis (strain Sheeba).